Reading from the N-terminus, the 126-residue chain is Protein FMP49, mitochondrial (126 aa).

Its subcellular location is the mitochondrion. This Saccharomyces cerevisiae (strain ATCC 204508 / S288c) (Baker's yeast) protein is Protein FMP49, mitochondrial.